Reading from the N-terminus, the 547-residue chain is Signal recognition particle receptor subunit alpha homolog (547 aa).

Positions 124–174 (LENETDTKSLPVEANNDNSARKKNEYEMKKKGAQSKQTNAPKKGKKQLRKW) are disordered. Residues 142–153 (SARKKNEYEMKK) are compositionally biased toward basic and acidic residues. The segment at 343–546 (YTISLIGVNG…SVDWVVDQLM (204 aa)) is NG domain. GTP is bound by residues 349-356 (GVNGVGKS), 437-441 (DTAGR), and 498-501 (SKVD).

The protein belongs to the GTP-binding SRP family. In terms of assembly, heterodimer of an alpha and a beta chain.

Its subcellular location is the endoplasmic reticulum membrane. Component of the SRP (signal recognition particle) receptor (SR). Ensures, in conjunction with the signal recognition particle, the correct targeting of the nascent secretory proteins to the endoplasmic reticulum membrane system. GTP hydrolysis may enhance the fidelity of and provide unidirectionality to the targeting reaction. In Schizosaccharomyces pombe (strain 972 / ATCC 24843) (Fission yeast), this protein is Signal recognition particle receptor subunit alpha homolog (srp101).